An 88-amino-acid chain; its full sequence is Beta-insect excitatory toxin 2 (88 aa).

Residues 1–18 form the signal peptide; the sequence is MKFLLLFLVVLPIMGVLG. One can recognise an LCN-type CS-alpha/beta domain in the interval 20–83; it reads KNGYAVDSSG…ISDTRKSYCD (64 aa). Intrachain disulfides connect Cys34–Cys55, Cys40–Cys60, Cys44–Cys62, and Cys56–Cys82.

Belongs to the long (4 C-C) scorpion toxin superfamily. Sodium channel inhibitor family. Beta subfamily. In terms of tissue distribution, expressed by the venom gland.

It is found in the secreted. Excitatory insect beta-toxins induce a spastic paralysis. They bind voltage-independently at site-4 of sodium channels (Nav) and shift the voltage of activation toward more negative potentials thereby affecting sodium channel activation and promoting spontaneous and repetitive firing. This toxin is active only on insects. The polypeptide is Beta-insect excitatory toxin 2 (Androctonus australis (Sahara scorpion)).